The primary structure comprises 631 residues: tRNA uridine 5-carboxymethylaminomethyl modification enzyme MnmG (631 aa).

FAD is bound at residue 13-18; sequence GGGHAG. An NAD(+)-binding site is contributed by 273 to 287; sequence GPRYCPSIEDKVNRF.

The protein belongs to the MnmG family. Homodimer. Heterotetramer of two MnmE and two MnmG subunits. FAD serves as cofactor.

The protein localises to the cytoplasm. Functionally, NAD-binding protein involved in the addition of a carboxymethylaminomethyl (cmnm) group at the wobble position (U34) of certain tRNAs, forming tRNA-cmnm(5)s(2)U34. This is tRNA uridine 5-carboxymethylaminomethyl modification enzyme MnmG from Chromohalobacter salexigens (strain ATCC BAA-138 / DSM 3043 / CIP 106854 / NCIMB 13768 / 1H11).